The primary structure comprises 165 residues: Sporulation thiol-disulfide oxidoreductase A (165 aa).

An N-terminal signal peptide occupies residues 1–26 (MLTKRLLTIYIMLLGLIAWFPGAAQA). The Thioredoxin domain occupies 27–165 (EEKQPAVPAV…AEQLKEWTEE (139 aa)). A disulfide bond links cysteine 65 and cysteine 68.

This sequence belongs to the thioredoxin family.

The protein resides in the spore outer membrane. In terms of biological role, thiol-disulfide oxidoreductase with a reductive function, involved in spore cortex synthesis. It could be involved either in breaking disulfide bonds in cortex components or in proteins that are important for cortex synthesis, or in thiol/disulfide bond interchange. This chain is Sporulation thiol-disulfide oxidoreductase A (stoA), found in Bacillus subtilis (strain 168).